Consider the following 1304-residue polypeptide: Splicing factor 3B subunit 1 (1304 aa).

Disordered regions lie at residues Gln-100–Tyr-119 and Arg-124–Asn-148. Over residues Phe-104–Tyr-119 the composition is skewed to basic and acidic residues. The residue at position 125 (Thr-125) is a Phosphothreonine. Ser-129 is subject to Phosphoserine. Lys-141 bears the N6-acetyllysine mark. At Thr-142 the chain carries Phosphothreonine. Arg-157 carries the citrulline modification. The tract at residues Ala-173–Ile-360 is disordered. The segment at Ser-190–Pro-342 is U2AF homology region; mediates interaction with RBM39. At Ser-194 the chain carries Phosphoserine. 3 positions are modified to phosphothreonine: Thr-203, Thr-207, and Thr-211. Residue Lys-214 is modified to N6-acetyllysine; alternate. Residue Lys-214 forms a Glycyl lysine isopeptide (Lys-Gly) (interchain with G-Cter in SUMO2); alternate linkage. Thr-223 and Thr-227 each carry phosphothreonine. The interval Thr-223–Glu-491 is interaction with PPP1R8. At Ser-229 the chain carries Phosphoserine. The segment covering Arg-231–Gly-241 has biased composition (basic and acidic residues). Phosphothreonine is present on residues Thr-235, Thr-244, Thr-248, Thr-257, Thr-261, Thr-267, Thr-273, and Thr-278. The residue at position 287 (Ser-287) is a Phosphoserine. Residues Asn-291–Pro-304 are compositionally biased toward basic and acidic residues. Phosphothreonine occurs at positions 296, 299, 303, and 313. Residue Ser-322 is modified to Phosphoserine. A phosphothreonine mark is found at Thr-326 and Thr-328. Residue Ser-332 is modified to Phosphoserine. Residue Thr-341 is modified to Phosphothreonine. Positions Pro-342–Val-352 are enriched in polar residues. Residues Ser-344 and Ser-349 each carry the phosphoserine modification. 2 positions are modified to phosphothreonine: Thr-350 and Thr-354. A Phosphoserine modification is found at Ser-400. A Glycyl lysine isopeptide (Lys-Gly) (interchain with G-Cter in SUMO2); alternate cross-link involves residue Lys-413. A Glycyl lysine isopeptide (Lys-Gly) (interchain with G-Cter in SUMO1); alternate cross-link involves residue Lys-413. A Phosphothreonine modification is found at Thr-426. A Glycyl lysine isopeptide (Lys-Gly) (interchain with G-Cter in SUMO2) cross-link involves residue Lys-430. A Phosphothreonine; by DYRK1A modification is found at Thr-434. Phosphothreonine is present on Thr-436. Ser-488 carries the phosphoserine modification. 11 HEAT repeats span residues Gly-529 to Arg-568, Pro-569 to Ala-603, Ala-604 to Ile-641, Ser-643 to Cys-677, Leu-680 to Pro-718, Asn-763 to Val-801, Lys-843 to Ala-881, Thr-1010 to Glu-1048, Ala-1052 to Pro-1090, Thr-1122 to Glu-1160, and Lys-1163 to Gly-1201. Positions Gly-529–Arg-568 are interaction with SF3B14. The interaction with PHF5A stretch occupies residues Gln-547 to His-550. Residues Lys-554 and Lys-562 each carry the N6-acetyllysine modification. The interval Glu-1156–Tyr-1157 is interaction with PHF5A. Residues Gln-1248–Leu-1304 form an interaction with SF3B3 and SF3B5 region.

This sequence belongs to the SF3B1 family. Component of the 17S U2 SnRNP complex, a ribonucleoprotein complex that contains small nuclear RNA (snRNA) U2 and a number of specific proteins. Part of the SF3B subcomplex of the 17S U2 SnRNP complex. SF3B associates with the splicing subcomplex SF3A and a 12S RNA unit to form the U2 small nuclear ribonucleoproteins complex (U2 snRNP). Within the SF3B complex, interacts directly (via HEAT domain) with SF3B3, SF3B5, SF3B6 and (via HEAT domain) with PHF5A. The SF3B subcomplex interacts with U2AF2. Identified in the spliceosome C complex. Component of the minor (U12-type spliceosome) spliceosome. Within the minor spliceosome complex, interacts with SCNM1 and CRIPT. Component of the B-WICH complex, at least composed of SMARCA5/SNF2H, BAZ1B/WSTF, SF3B1, DEK, MYO1C, ERCC6, MYBBP1A and DDX21. Phosphorylated form interacts with PPP1R8. Interacts with PQBP1. Interacts with RBM17. Interacts with RBM39. Interacts with SETX. Interacts with RBM15. Interacts with USH1G. Interacts with SDE2. Interacts with U2AF1. Interacts with CACTIN. Interacts with ZRSR1. Interacts with CYREN. Phosphorylated. Phosphorylation occurs concomitantly with the splicing catalytic steps. Phosphorylation on Thr-244, Thr-248 and Thr-313 by cyclin-dependent kinases promotes interaction with PPP1R8 during mitosis. Post-translationally, citrullinated by PADI4.

The protein resides in the nucleus. Its subcellular location is the nucleus speckle. In terms of biological role, component of the 17S U2 SnRNP complex of the spliceosome, a large ribonucleoprotein complex that removes introns from transcribed pre-mRNAs. The 17S U2 SnRNP complex (1) directly participates in early spliceosome assembly and (2) mediates recognition of the intron branch site during pre-mRNA splicing by promoting the selection of the pre-mRNA branch-site adenosine, the nucleophile for the first step of splicing. Within the 17S U2 SnRNP complex, SF3B1 is part of the SF3B subcomplex, which is required for 'A' complex assembly formed by the stable binding of U2 snRNP to the branchpoint sequence in pre-mRNA. Sequence independent binding of SF3A and SF3B subcomplexes upstream of the branch site is essential, it may anchor U2 snRNP to the pre-mRNA. May also be involved in the assembly of the 'E' complex. Also acts as a component of the minor spliceosome, which is involved in the splicing of U12-type introns in pre-mRNAs. Together with other U2 snRNP complex components may also play a role in the selective processing of microRNAs (miRNAs) from the long primary miRNA transcript, pri-miR-17-92. This Homo sapiens (Human) protein is Splicing factor 3B subunit 1.